The following is a 327-amino-acid chain: GMP reductase (327 aa).

Residue C175 is the Thioimidate intermediate of the active site. 204-227 (IIADGGIRTHGDVAKSIRFGATMV) contacts NADP(+).

The protein belongs to the IMPDH/GMPR family. GuaC type 2 subfamily.

The catalysed reaction is IMP + NH4(+) + NADP(+) = GMP + NADPH + 2 H(+). Catalyzes the irreversible NADPH-dependent deamination of GMP to IMP. It functions in the conversion of nucleobase, nucleoside and nucleotide derivatives of G to A nucleotides, and in maintaining the intracellular balance of A and G nucleotides. This Bacillus cereus (strain ATCC 10987 / NRS 248) protein is GMP reductase.